Reading from the N-terminus, the 479-residue chain is Shugoshin (479 aa).

The stretch at 36-76 (SLRIRSLESEVSNLLSENVSLREQIITLTQELERFEAARTL) forms a coiled coil. 3 disordered regions span residues 109-145 (SRAVRENGEPAPARQSRESGPKEVDDTDPEPNLGFLD), 220-247 (EHSLPPNLETRRKKKIGPATVNKDQADT), and 263-479 (AKRK…SMPP). Residues 123-132 (QSRESGPKEV) are compositionally biased toward basic and acidic residues. The segment covering 270-286 (EDDESLFESSPSEDDEF) has biased composition (acidic residues). Composition is skewed to polar residues over residues 290–303 (RPAQSPKLFSQNEH) and 318–328 (QSPTLSSQNDH). Basic and acidic residues-rich tracts occupy residues 335 to 352 (PQSERSIAHVHGERRVLE) and 379 to 388 (GYNEKSEKPL). Polar residues predominate over residues 400–411 (KNASPKKSSTRT).

The protein belongs to the shugoshin family.

It is found in the nucleus. The protein localises to the chromosome. It localises to the centromere. Its function is as follows. Plays a central role in chromosome cohesion during cell division by preventing premature dissociation of cohesin complex from centromeres after prophase, when most of cohesin complex dissociates from chromosomes arms. This Emericella nidulans (strain FGSC A4 / ATCC 38163 / CBS 112.46 / NRRL 194 / M139) (Aspergillus nidulans) protein is Shugoshin (sgo1).